The sequence spans 418 residues: Nuclear receptor coactivator 6 (418 aa).

Disordered regions lie at residues 1–21 (EQIM…QNQS) and 77–98 (PPGP…ANND). The TBP/GTF2A-binding region stretch occupies residues 1 to 215 (EQIMTNQMQG…PPRKKKNCHQ (215 aa)). Residues 1–352 (EQIMTNQMQG…LPVSQNVHPP (352 aa)) form a CREBBP-binding region region. The NCOA1-binding region stretch occupies residues 1-418 (EQIMTNQMQG…YQESPQNSSS (418 aa)). The interval 60-214 (VSNSPSQVMG…KPPRKKKNCH (155 aa)) is NCOA6IP-binding region. Residues 84 to 98 (MAQQHTDPATTANND) are compositionally biased toward polar residues. At serine 171 the chain carries Phosphoserine. The LXXLL motif signature appears at 174–178 (LVNLL). The segment at 186–418 (HFGVNNKQNN…YQESPQNSSS (233 aa)) is disordered. Low complexity predominate over residues 190 to 199 (NNKQNNTNAN). Over residues 200 to 212 (KQKKKKPPRKKKN) the composition is skewed to basic residues. The span at 269-279 (PLQQMPPQLMQ) shows a compositional bias: low complexity. The segment covering 282–310 (APPPQPPQQQPQPQLPQQQPQPQPPPPSQ) has biased composition (pro residues). Residues 311–336 (PQSQQQQQQQQQQQQQQMMMMLMMQQ) are compositionally biased toward low complexity. Asymmetric dimethylarginine occurs at positions 342 and 353. The span at 358-370 (PDSQRVPMQQSGN) shows a compositional bias: polar residues. The residue at position 391 (arginine 391) is an Asymmetric dimethylarginine. The segment covering 399-418 (PLGSNSRKMVYQESPQNSSS) has biased composition (polar residues).

In terms of assembly, monomer and homodimer. Interacts in vitro with the basal transcription factors GTF2A and TBP, suggesting an autonomous transactivation function. Interacts with NCOA1, CRSP3, RBM14, the histone acetyltransferase proteins EP300 and CREBBP, and with methyltransferase proteins NCOA6IP and PRMT2. Component of the MLL2/3 complex (also named ASCOM complex), at least composed of KMT2D/MLL2 or KMT2C/MLL3, ASH2L, RBBP5, WDR5, NCOA6, DPY30, KDM6A, PAXIP1/PTIP, PAGR1 and alpha- and beta-tubulin. Interacts with ZNF335; may enhance ligand-dependent transcriptional activation by nuclear hormone receptors. Phosphorylated.

Its subcellular location is the nucleus. Its function is as follows. Nuclear receptor coactivator that directly binds nuclear receptors and stimulates the transcriptional activities in a hormone-dependent fashion. Coactivate expression in an agonist- and AF2-dependent manner. May coactivate expression via a remodeling of chromatin and its interaction with histone acetyltransferase proteins. Involved in the coactivation of different nuclear receptors, such as for steroids (GR and ERs), retinoids (RARs and RXRs), thyroid hormone (TRs), vitamin D3 (VDR) and prostanoids (PPARs). Probably functions as a general coactivator, rather than just a nuclear receptor coactivator. May also be involved in the coactivation of the NF-kappa-B pathway. The sequence is that of Nuclear receptor coactivator 6 (Ncoa6) from Rattus norvegicus (Rat).